Here is a 407-residue protein sequence, read N- to C-terminus: 5-aminolevulinate synthase 1 (407 aa).

Substrate contacts are provided by R21, S137, and K156. 3 residues coordinate pyridoxal 5'-phosphate: S189, H217, and T245. The active site involves K248. K248 is subject to N6-(pyridoxal phosphate)lysine. 2 residues coordinate pyridoxal 5'-phosphate: S277 and T278. Residue T363 participates in substrate binding.

It belongs to the class-II pyridoxal-phosphate-dependent aminotransferase family. Homodimer. The cofactor is pyridoxal 5'-phosphate.

It carries out the reaction succinyl-CoA + glycine + H(+) = 5-aminolevulinate + CO2 + CoA. Its pathway is porphyrin-containing compound metabolism; protoporphyrin-IX biosynthesis; 5-aminolevulinate from glycine: step 1/1. The protein is 5-aminolevulinate synthase 1 (hemA) of Cereibacter sphaeroides (strain ATCC 17023 / DSM 158 / JCM 6121 / CCUG 31486 / LMG 2827 / NBRC 12203 / NCIMB 8253 / ATH 2.4.1.) (Rhodobacter sphaeroides).